Here is a 194-residue protein sequence, read N- to C-terminus: UPF0215 protein PF2042 (194 aa).

It belongs to the UPF0215 family.

The polypeptide is UPF0215 protein PF2042 (Pyrococcus furiosus (strain ATCC 43587 / DSM 3638 / JCM 8422 / Vc1)).